The primary structure comprises 254 residues: uncharacterized protein (254 aa).

Residues Pro60–Thr161 form a disordered region. Low complexity-rich tracts occupy residues Pro63–Pro77 and Thr89–Ser146.

This is an uncharacterized protein from Caenorhabditis elegans.